Here is a 425-residue protein sequence, read N- to C-terminus: Serine--tRNA ligase (425 aa).

Position 230–232 (230–232 (TAE)) interacts with L-serine. 261-263 (RAE) serves as a coordination point for ATP. Glu-284 is an L-serine binding site. Residue 348 to 351 (EISS) participates in ATP binding. Residue Ser-384 participates in L-serine binding.

The protein belongs to the class-II aminoacyl-tRNA synthetase family. Type-1 seryl-tRNA synthetase subfamily. As to quaternary structure, homodimer. The tRNA molecule binds across the dimer.

It is found in the cytoplasm. The catalysed reaction is tRNA(Ser) + L-serine + ATP = L-seryl-tRNA(Ser) + AMP + diphosphate + H(+). It carries out the reaction tRNA(Sec) + L-serine + ATP = L-seryl-tRNA(Sec) + AMP + diphosphate + H(+). It participates in aminoacyl-tRNA biosynthesis; selenocysteinyl-tRNA(Sec) biosynthesis; L-seryl-tRNA(Sec) from L-serine and tRNA(Sec): step 1/1. Catalyzes the attachment of serine to tRNA(Ser). Is also able to aminoacylate tRNA(Sec) with serine, to form the misacylated tRNA L-seryl-tRNA(Sec), which will be further converted into selenocysteinyl-tRNA(Sec). The protein is Serine--tRNA ligase of Desulforudis audaxviator (strain MP104C).